The sequence spans 366 residues: RISC-loading complex subunit TARBP2 (366 aa).

3 sufficient for interaction with PRKRA regions span residues 22–105 (MLAA…EPAL), 152–234 (SPQQ…DARD), and 287–366 (LGAL…AGSK). Positions 30–97 (TPISLLQEYG…AEVALKHLKG (68 aa)) constitute a DRBM 1 domain. Ser152 bears the Phosphoserine mark. DRBM domains lie at 159-227 (NPVG…RVHT) and 293-361 (ACCR…YLKI). The tract at residues 228–366 (VPLDARDGNE…QYLKIMAGSK (139 aa)) is sufficient for interaction with DICER1.

This sequence belongs to the TARBP2 family. Self-associates. Component of the RISC loading complex (RLC), or micro-RNA (miRNA) loading complex (miRLC), which is composed of DICER1, AGO2 and TARBP2. Note that the trimeric RLC/miRLC is also referred to as RISC. Interacts with EIF2AK2/PKR and inhibits its protein kinase activity. Interacts with DHX9 and PRKRA. Interacts with DICER1, AGO2, MOV10, EIF6 and RPL7A (60S ribosome subunit); they form a large RNA-induced silencing complex (RISC). Interacts with IRF7; this interaction prevents IRF7 phosphorylation and activation. In terms of assembly, (Microbial infection) Interacts with FTSJ3; forms a complex with FTSJ3 and HIV-1 TAR RNA. As to quaternary structure, (Microbial infection) Interacts with ebolavirus VP30; this interaction, which occurs only in the presence of siRNA, prevents TARBP2 binding to DICER1 and thus allows the virus to counteract host RNA silencing. (Microbial infection) Interacts with ebolavirus VP35; this interaction prevents TARBP2 binding to DICER1 and thus allows the virus to counteract host RNA silencing.

The protein localises to the cytoplasm. Its subcellular location is the perinuclear region. It localises to the nucleus. In terms of biological role, required for formation of the RNA induced silencing complex (RISC). Component of the RISC loading complex (RLC), also known as the micro-RNA (miRNA) loading complex (miRLC), which is composed of DICER1, AGO2 and TARBP2. Within the RLC/miRLC, DICER1 and TARBP2 are required to process precursor miRNAs (pre-miRNAs) to mature miRNAs and then load them onto AGO2. AGO2 bound to the mature miRNA constitutes the minimal RISC and may subsequently dissociate from DICER1 and TARBP2. May also play a role in the production of short interfering RNAs (siRNAs) from double-stranded RNA (dsRNA) by DICER1. Binds in vitro to the PRM1 3'-UTR. Seems to act as a repressor of translation. For some pre-miRNA substrates, may also alter the choice of cleavage site by DICER1. Negatively regulates IRF7-mediated IFN-beta signaling triggered by viral infection by inhibiting the phosphorylation of IRF7 and promoting its 'Lys'-48-linked ubiquitination and degradation. (Microbial infection) Binds to the HIV-1 TAR RNA which is located in the long terminal repeat (LTR) of HIV-1, and stimulates translation of TAR-containing RNAs. This is achieved in part at least by binding to and inhibiting EIF2AK2/PKR, thereby reducing phosphorylation and inhibition of EIF2S1/eIF-2-alpha. May also promote translation of TAR-containing RNAs independently of EIF2AK2/PKR. Mediates recruitment of FTSJ3 methyltransferase to HIV-1 RNA, leading to 2'-O-methylation of the viral genome, allowing HIV-1 to escape the innate immune system. The polypeptide is RISC-loading complex subunit TARBP2 (Homo sapiens (Human)).